Reading from the N-terminus, the 693-residue chain is Subtilisin-like protease SBT4.10 (693 aa).

The signal sequence occupies residues 1 to 25 (MAKLREASFCALACVLVLFLSFVSA). Residues 26-113 (DTYNRQDKQV…VFPSKKYKLH (88 aa)) constitute a propeptide, activation peptide. The Inhibitor I9 domain maps to 35–113 (VYVVYMGSLP…VFPSKKYKLH (79 aa)). In terms of domain architecture, Peptidase S8 spans 117 to 536 (SWDFMGLKEG…SGHIDPIAAI (420 aa)). The Charge relay system role is filled by Asp145. N-linked (GlcNAc...) asparagine glycosylation is present at Asn176. His200 (charge relay system) is an active-site residue. N-linked (GlcNAc...) asparagine glycosylation is found at Asn215, Asn223, Asn368, Asn413, and Asn467. The 43-residue stretch at 354-396 (QYPLVYETSVEKCNNESLTTLALSFLTLTPQSNEQIISMFHTL) folds into the PA domain. Residue Ser475 is the Charge relay system of the active site. N-linked (GlcNAc...) asparagine glycosylation is found at Asn559, Asn603, and Asn613.

This sequence belongs to the peptidase S8 family. In terms of processing, the C-terminal propeptide is autocleaved.

The protein resides in the secreted. The sequence is that of Subtilisin-like protease SBT4.10 from Arabidopsis thaliana (Mouse-ear cress).